We begin with the raw amino-acid sequence, 318 residues long: Nodulation protein D 2 (318 aa).

An HTH lysR-type domain is found at 6-63 (LDLNLLVALDALTTERNLTAAARSINLSQPAMSAAIGRLRDYFRDELFTMNGRELRLT). The H-T-H motif DNA-binding region spans 23 to 42 (LTAAARSINLSQPAMSAAIG).

It belongs to the LysR transcriptional regulatory family.

Its function is as follows. NodD regulates the expression of the nodABCFE genes which encode other nodulation proteins. NodD is also a negative regulator of its own expression. Binds flavonoids as inducers. In Rhizobium leguminosarum bv. phaseoli, this protein is Nodulation protein D 2 (nodD2).